Reading from the N-terminus, the 550-residue chain is MLEKSLLLVTLLFALCSANLFGNNSYVYYYQSAFRPPNGWHLHGGAYEVVNVSTESSNAGTTECTAGAIYWSKNFSAASVAMTAPQNGMLWSTAQFCTAHCNFTDFVVFVTHCYKSASGSCPLTGLIPQYHIRISAMKNSSLFYNLTVAVTKYPRFKSLQCVNNMTSVYLNGDLVFTSNETKDVSAAGVHFKAGGPITYKVMREVKALAYFVNGTAQDVILCDGSPTGLLACQYNTGNFSDGFYPFTNSSLVKEKFIVYRESSVNTTLELTNFTFSNVSNANPNTGGVHTIQLYQTSTAQSGHYNFNFSFLSSFTYKESDYMYGSYHPSCKFRLETINNGLWFNSLSVSLGYGPIQGGCKQSVFQNRATCCYAYSYNGPPLCKGVYRGELTKSFECGLLVFVTKTDGSRIQTRNEPFTLTQHNYNNITLDRCVEYNIYGRVGQGFITNVTNYAINYNYLADGGMAILDTSGAIDIFVVQGEYGLNYYKVNPCEDVNQQFVVSGGKLVGILTSRNETGSQPLENQFYIKIINGTRRSRRSITGNVTNCPYV.

A signal peptide spans 1 to 18; that stretch reads MLEKSLLLVTLLFALCSA. At 19-550 the chain is on the extracellular side; that stretch reads NLFGNNSYVY…TGNVTNCPYV (532 aa). 19 N-linked (GlcNAc...) asparagine; by host glycosylation sites follow: Asn23, Asn74, Asn102, Asn139, Asn145, Asn164, Asn179, Asn213, Asn238, Asn248, Asn265, Asn272, Asn277, Asn307, Asn426, Asn448, Asn514, Asn531, and Asn543.

It belongs to the coronaviruses spike protein family. Homotrimer; each monomer consists of a S1 and a S2 subunit. The resulting peplomers protrude from the virus surface as spikes. Post-translationally, specific enzymatic cleavages in vivo yield mature proteins. The precursor is processed into S1 and S2 by host cell furin or furin-like protease to yield the mature S1 and S2 proteins. The cleavage site between S1 and S2 requires the optimal sequence [KR]-X-[KR]-R. Cleavage is not necessary for virus-cell fusion.

The protein resides in the virion membrane. Its subcellular location is the host endoplasmic reticulum-Golgi intermediate compartment membrane. S1 attaches the virion to the cell membrane by interacting with cell receptors, initiating the infection. In terms of biological role, S2 is a class I viral fusion protein. Under the current model, the protein has at least 3 conformational states: pre-fusion native state, pre-hairpin intermediate state, and post-fusion hairpin state. During viral and target cell membrane fusion, the coiled coil regions (heptad repeats) assume a trimer-of-hairpins structure, positioning the fusion peptide in close proximity to the C-terminal region of the ectodomain. The formation of this structure appears to drive apposition and subsequent fusion of viral and target cell membranes. The chain is Spike glycoprotein (S) from Avian infectious bronchitis virus (strain D3896) (IBV).